Consider the following 942-residue polypeptide: Isoleucine--tRNA ligase (942 aa).

The 'HIGH' region signature appears at 58 to 68; that stretch reads PYANGDIHIGH. Glu566 contributes to the L-isoleucyl-5'-AMP binding site. The 'KMSKS' region motif lies at 607–611; the sequence is KMSKS. Residue Lys610 coordinates ATP. The Zn(2+) site is built by Cys905, Cys908, Cys925, and Cys928.

This sequence belongs to the class-I aminoacyl-tRNA synthetase family. IleS type 1 subfamily. As to quaternary structure, monomer. The cofactor is Zn(2+).

It localises to the cytoplasm. It carries out the reaction tRNA(Ile) + L-isoleucine + ATP = L-isoleucyl-tRNA(Ile) + AMP + diphosphate. Catalyzes the attachment of isoleucine to tRNA(Ile). As IleRS can inadvertently accommodate and process structurally similar amino acids such as valine, to avoid such errors it has two additional distinct tRNA(Ile)-dependent editing activities. One activity is designated as 'pretransfer' editing and involves the hydrolysis of activated Val-AMP. The other activity is designated 'posttransfer' editing and involves deacylation of mischarged Val-tRNA(Ile). The protein is Isoleucine--tRNA ligase of Pseudoalteromonas atlantica (strain T6c / ATCC BAA-1087).